Here is a 547-residue protein sequence, read N- to C-terminus: Chaperonin GroEL (547 aa).

ATP is bound by residues 30-33 (TLGP), lysine 51, 87-91 (DGTTT), glycine 415, 479-481 (NAA), and aspartate 495.

It belongs to the chaperonin (HSP60) family. As to quaternary structure, forms a cylinder of 14 subunits composed of two heptameric rings stacked back-to-back. Interacts with the co-chaperonin GroES.

It is found in the cytoplasm. The enzyme catalyses ATP + H2O + a folded polypeptide = ADP + phosphate + an unfolded polypeptide.. Its function is as follows. Together with its co-chaperonin GroES, plays an essential role in assisting protein folding. The GroEL-GroES system forms a nano-cage that allows encapsulation of the non-native substrate proteins and provides a physical environment optimized to promote and accelerate protein folding. The polypeptide is Chaperonin GroEL (Cupriavidus metallidurans (strain ATCC 43123 / DSM 2839 / NBRC 102507 / CH34) (Ralstonia metallidurans)).